Reading from the N-terminus, the 210-residue chain is Outer-membrane lipoprotein carrier protein (210 aa).

Residues 1–23 form the signal peptide; sequence MKKRIQKTILTVLFSSLSSIAFA.

It belongs to the LolA family. Monomer.

The protein localises to the periplasm. Participates in the translocation of lipoproteins from the inner membrane to the outer membrane. Only forms a complex with a lipoprotein if the residue after the N-terminal Cys is not an aspartate (The Asp acts as a targeting signal to indicate that the lipoprotein should stay in the inner membrane). In Haemophilus ducreyi (strain 35000HP / ATCC 700724), this protein is Outer-membrane lipoprotein carrier protein.